We begin with the raw amino-acid sequence, 256 residues long: Pimeloyl-[acyl-carrier protein] methyl ester esterase (256 aa).

Residues 15–242 enclose the AB hydrolase-1 domain; it reads HLVLLHGWGL…AAHAPFISHP (228 aa). Residues Trp-22, 82 to 83, and 143 to 147 contribute to the substrate site; these read SL and FLALQ. The Nucleophile role is filled by Ser-82. Catalysis depends on residues Asp-207 and His-235. His-235 is a substrate binding site.

The protein belongs to the AB hydrolase superfamily. Carboxylesterase BioH family. As to quaternary structure, monomer.

The protein resides in the cytoplasm. It catalyses the reaction 6-carboxyhexanoyl-[ACP] methyl ester + H2O = 6-carboxyhexanoyl-[ACP] + methanol + H(+). It functions in the pathway cofactor biosynthesis; biotin biosynthesis. In terms of biological role, the physiological role of BioH is to remove the methyl group introduced by BioC when the pimeloyl moiety is complete. It allows to synthesize pimeloyl-ACP via the fatty acid synthetic pathway through the hydrolysis of the ester bonds of pimeloyl-ACP esters. The sequence is that of Pimeloyl-[acyl-carrier protein] methyl ester esterase from Escherichia coli (strain K12 / MC4100 / BW2952).